The following is a 280-amino-acid chain: Ribosomal RNA small subunit methyltransferase A (280 aa).

Residues Asn28, Leu30, Gly55, Glu77, Asp103, and Asn122 each coordinate S-adenosyl-L-methionine.

Belongs to the class I-like SAM-binding methyltransferase superfamily. rRNA adenine N(6)-methyltransferase family. RsmA subfamily.

The protein resides in the cytoplasm. The catalysed reaction is adenosine(1518)/adenosine(1519) in 16S rRNA + 4 S-adenosyl-L-methionine = N(6)-dimethyladenosine(1518)/N(6)-dimethyladenosine(1519) in 16S rRNA + 4 S-adenosyl-L-homocysteine + 4 H(+). In terms of biological role, specifically dimethylates two adjacent adenosines (A1518 and A1519) in the loop of a conserved hairpin near the 3'-end of 16S rRNA in the 30S particle. May play a critical role in biogenesis of 30S subunits. The polypeptide is Ribosomal RNA small subunit methyltransferase A (Ruegeria sp. (strain TM1040) (Silicibacter sp.)).